Reading from the N-terminus, the 302-residue chain is Recombination-associated protein RdgC (302 aa).

Belongs to the RdgC family.

Its subcellular location is the cytoplasm. It localises to the nucleoid. In terms of biological role, may be involved in recombination. The polypeptide is Recombination-associated protein RdgC (Haemophilus influenzae (strain PittGG)).